Consider the following 307-residue polypeptide: Small ribosomal subunit biogenesis GTPase RsgA (307 aa).

Positions 78 to 240 (HKTAFGHLIA…VIDTPGIKEL (163 aa)) constitute a CP-type G domain. Residues 128–131 (NKSD) and 182–190 (GHSGVGKST) each bind GTP. C264, C269, H271, and C277 together coordinate Zn(2+).

Belongs to the TRAFAC class YlqF/YawG GTPase family. RsgA subfamily. As to quaternary structure, monomer. Associates with 30S ribosomal subunit, binds 16S rRNA. The cofactor is Zn(2+).

The protein resides in the cytoplasm. In terms of biological role, one of several proteins that assist in the late maturation steps of the functional core of the 30S ribosomal subunit. Helps release RbfA from mature subunits. May play a role in the assembly of ribosomal proteins into the subunit. Circularly permuted GTPase that catalyzes slow GTP hydrolysis, GTPase activity is stimulated by the 30S ribosomal subunit. The sequence is that of Small ribosomal subunit biogenesis GTPase RsgA from Cytophaga hutchinsonii (strain ATCC 33406 / DSM 1761 / CIP 103989 / NBRC 15051 / NCIMB 9469 / D465).